A 464-amino-acid polypeptide reads, in one-letter code: tRNA-2-methylthio-N(6)-dimethylallyladenosine synthase (464 aa).

Positions 1 to 25 (MSDLVPLSRKPAPAAGDPAPSPAAP) are disordered. The MTTase N-terminal domain occupies 27–142 (RKVYVHTFGC…LPEMVERARG (116 aa)). The [4Fe-4S] cluster site is built by cysteine 36, cysteine 72, cysteine 105, cysteine 180, cysteine 184, and cysteine 187. One can recognise a Radical SAM core domain in the interval 166–398 (ARGRATAFVT…LAAQRRIAGE (233 aa)). The region spanning 401 to 464 (AAELGKVVEV…GGSSLSGTLA (64 aa)) is the TRAM domain.

Belongs to the methylthiotransferase family. MiaB subfamily. As to quaternary structure, monomer. It depends on [4Fe-4S] cluster as a cofactor.

Its subcellular location is the cytoplasm. The catalysed reaction is N(6)-dimethylallyladenosine(37) in tRNA + (sulfur carrier)-SH + AH2 + 2 S-adenosyl-L-methionine = 2-methylsulfanyl-N(6)-dimethylallyladenosine(37) in tRNA + (sulfur carrier)-H + 5'-deoxyadenosine + L-methionine + A + S-adenosyl-L-homocysteine + 2 H(+). Catalyzes the methylthiolation of N6-(dimethylallyl)adenosine (i(6)A), leading to the formation of 2-methylthio-N6-(dimethylallyl)adenosine (ms(2)i(6)A) at position 37 in tRNAs that read codons beginning with uridine. This Anaeromyxobacter dehalogenans (strain 2CP-C) protein is tRNA-2-methylthio-N(6)-dimethylallyladenosine synthase.